The primary structure comprises 676 residues: LIM domain-containing protein 1 (676 aa).

The segment at 54–134 (KIHLQQQQQQ…PPYPPQEQRS (81 aa)) is mediates nuclear export. 2 disordered regions span residues 104–163 (KPPL…SAFH) and 189–389 (KWGD…TSLV). At S145 the chain carries Phosphoserine. Residues 186-260 (ASPKWGDKPG…IGGRSSEKPT (75 aa)) form an interaction with EGLN1/PHD2 region. Low complexity-rich tracts occupy residues 201-213 (GLSV…SSPG) and 232-242 (LSLSSSRSSEG). 2 positions are modified to phosphoserine: S233 and S239. The span at 243-253 (SLGGQNSGIGG) shows a compositional bias: gly residues. Positions 262–271 (LWSTASSQRV) are enriched in polar residues. S272, S277, S304, and S316 each carry phosphoserine. The segment covering 343–360 (SYLSSSAPSSSPAGLDGS) has biased composition (low complexity). The segment at 404 to 442 (GPLGWSSDGSLGSVLLDSPSSPRVRLPCQPLVPGPELRP) is interaction with RB1. Phosphoserine occurs at positions 421 and 424. LIM zinc-binding domains lie at 470–531 (GACV…SGFQ), 535–595 (DRCF…VLAP), and 595–664 (PKCA…RLEK). The necessary for nuclear localization stretch occupies residues 472–676 (CVKCSKGVFG…SSTALHQHHF (205 aa)).

The protein belongs to the zyxin/ajuba family. As to quaternary structure, interacts (via LIM domains) with TRAF6. Found in a complex with TRAF6, PRKCZ and SQSTM1. Interacts (via LIM domains) SNAI2/SLUG (via SNAG domain) and SCRT1 (via SNAG domain). Interacts with SQSTM1 and RB1. Found in a complex composed of LIMD1, VHL, EGLN1/PHD2, ELOB and CUL2. Interacts with EIF4E, AGO1, AGO2, DCP2, DDX6, LATS1, LATS2, EGLN1/PHD2, EGLN2/PHD1 and EGLN3/PHD3. Interacts (via LIM zinc-binding 2) with isoform 1 and isoform 3 of VHL. Interacts (via LIM domains) with SNAI1 (via SNAG domain). Phosphorylated during mitosis. As to expression, expressed in normal and breast cancer tissues (at protein level). Ubiquitous.

It is found in the cytoplasm. The protein localises to the nucleus. It localises to the P-body. Its subcellular location is the cell junction. The protein resides in the adherens junction. It is found in the focal adhesion. Functionally, adapter or scaffold protein which participates in the assembly of numerous protein complexes and is involved in several cellular processes such as cell fate determination, cytoskeletal organization, repression of gene transcription, cell-cell adhesion, cell differentiation, proliferation and migration. Positively regulates microRNA (miRNA)-mediated gene silencing and is essential for P-body formation and integrity. Acts as a hypoxic regulator by bridging an association between the prolyl hydroxylases and VHL enabling efficient degradation of HIF1A. Acts as a transcriptional corepressor for SNAI1- and SNAI2/SLUG-dependent repression of E-cadherin transcription. Negatively regulates the Hippo signaling pathway and antagonizes phosphorylation of YAP1. Inhibits E2F-mediated transcription, and suppresses the expression of the majority of genes with E2F1-responsive elements. Regulates osteoblast development, function, differentiation and stress osteoclastogenesis. Enhances the ability of TRAF6 to activate adapter protein complex 1 (AP-1) and negatively regulates the canonical Wnt receptor signaling pathway in osteoblasts. May act as a tumor suppressor by inhibiting cell proliferation. The polypeptide is LIM domain-containing protein 1 (LIMD1) (Homo sapiens (Human)).